A 227-amino-acid polypeptide reads, in one-letter code: Uracil-DNA glycosylase (227 aa).

D68 functions as the Proton acceptor in the catalytic mechanism.

It belongs to the uracil-DNA glycosylase (UDG) superfamily. UNG family.

The protein localises to the cytoplasm. It carries out the reaction Hydrolyzes single-stranded DNA or mismatched double-stranded DNA and polynucleotides, releasing free uracil.. Functionally, excises uracil residues from the DNA which can arise as a result of misincorporation of dUMP residues by DNA polymerase or due to deamination of cytosine. This chain is Uracil-DNA glycosylase, found in Mycobacterium leprae (strain Br4923).